A 402-amino-acid polypeptide reads, in one-letter code: Tyrosine-protein kinase transforming protein ros (402 aa).

In terms of domain architecture, Protein kinase spans 98–377 (LNLHKLLGSG…KLQEIRHSPL (280 aa)). ATP contacts are provided by residues 104–112 (LGSGAFGEV) and K133. D232 (proton acceptor) is an active-site residue. Y268 bears the Phosphotyrosine; by autocatalysis mark.

The protein belongs to the protein kinase superfamily. Tyr protein kinase family. Insulin receptor subfamily.

The enzyme catalyses L-tyrosyl-[protein] + ATP = O-phospho-L-tyrosyl-[protein] + ADP + H(+). This is Tyrosine-protein kinase transforming protein ros (V-ROS) from Galliformes (UR2SV).